The following is a 538-amino-acid chain: Solute carrier family 2, facilitated glucose transporter member 9 (538 aa).

The Cytoplasmic segment spans residues 1 to 34; that stretch reads MDSRELALASLMCDTGGPGELSVGHQQRRTKKWS. Residue Ser3 is modified to Phosphoserine. The chain crosses the membrane as a helical span at residues 35 to 54; it reads FSLVVAALVGAFGSSFLYGY. Asn55 and Asn71 each carry an N-linked (GlcNAc...) asparagine glycan. Topologically, residues 55–88 are extracellular; that stretch reads NLSVVNAPTPYIKAFYNGTWYRRHGQPIDPDTLT. A helical membrane pass occupies residues 89–109; the sequence is LLWSVTVSIFAIGGLVGTLMV. The Cytoplasmic portion of the chain corresponds to 110 to 120; the sequence is KMIGKFLGRKS. Residues 121–143 traverse the membrane as a helical segment; the sequence is TLLVNNGFAISAALLMACSLRAG. The Extracellular segment spans residues 144 to 148; the sequence is TFEML. The helical transmembrane segment at 149–170 threads the bilayer; sequence IVGRFIMGVDGGIALSALPMYL. The Cytoplasmic segment spans residues 171–181; the sequence is NEISPKEIRGS. The chain crosses the membrane as a helical span at residues 182-200; sequence LGQVTAIFICIGVFSGQLL. Over 201-211 the chain is Extracellular; sequence GLPELLGREST. Residues 212–233 traverse the membrane as a helical segment; the sequence is WPYLFGVIIVPALVQLASLPFL. The Cytoplasmic portion of the chain corresponds to 234–297; the sequence is PESPRYLLFE…LLRAPFVRWQ (64 aa). The chain crosses the membrane as a helical span at residues 298–319; the sequence is VITVIITMASYQLCGLNAIWFY. Topologically, residues 320–333 are extracellular; sequence TNSIFGKAGIPQDK. The chain crosses the membrane as a helical span at residues 334–356; that stretch reads IPYITLSTGGIETLAAIFSGLVI. At 357-362 the chain is on the cytoplasmic side; it reads ERLGRR. A helical membrane pass occupies residues 363–385; it reads PLLIGGFGLMALFFGTLTATLTL. Residues 386–390 lie on the Extracellular side of the membrane; it reads QDQAP. The chain crosses the membrane as a helical span at residues 391–418; that stretch reads WVPYLSIVCILAIIASFCSGPGGIPFIL. Topologically, residues 419–429 are cytoplasmic; it reads TGEFFQQSERP. Residues 430 to 453 form a helical membrane-spanning segment; it reads AAFMIAGTVNWLSNFAVGLLFPFI. Over 454–458 the chain is Extracellular; sequence QKSLD. A helical transmembrane segment spans residues 459–480; that stretch reads SYCFLVFATICIAGATYFYFVL. Topologically, residues 481–538 are cytoplasmic; it reads PETKNRTHAEISQAFAKRNKAQPPEVKADSAMTEEKANSQTEPDSSSTLDSYGQNKIV. The disordered stretch occupies residues 495–538; sequence FAKRNKAQPPEVKADSAMTEEKANSQTEPDSSSTLDSYGQNKIV. Residues 518–538 are compositionally biased toward polar residues; that stretch reads NSQTEPDSSSTLDSYGQNKIV.

This sequence belongs to the major facilitator superfamily. Sugar transporter (TC 2.A.1.1) family. In terms of processing, N-glycosylated. As to expression, highly expressed in the intestine, with high expression in the jejunum and ileum, the segments of the intestine that perform the majority of urate excretion. Isoform 1: Widely expressed. Isoform 1: In kidney, expressed at low levels in proximal tubules. Isoform 2: Primarily expressed in liver and kidney; with specific expression in distal convoluted and connecting tubules of kidney.

It localises to the basolateral cell membrane. The protein localises to the apical cell membrane. The catalysed reaction is urate(out) = urate(in). Its function is as follows. High-capacity urate transporter, which may play a role in the urate reabsorption by proximal tubules. May have a residual high-affinity, low-capacity glucose and fructose transporter activity. Transports urate at rates 45- to 60-fold faster than glucose. Does not transport galactose. May mediate small uptake of adenine but not of other nucleobases. The chain is Solute carrier family 2, facilitated glucose transporter member 9 from Mus musculus (Mouse).